Consider the following 35-residue polypeptide: Protein YbgU (35 aa).

This Escherichia coli (strain K12) protein is Protein YbgU.